A 179-amino-acid polypeptide reads, in one-letter code: Acireductone dioxygenase (179 aa).

The segment covering 1 to 12 (MVEAWYMDDSEE) has biased composition (acidic residues). Residues 1–21 (MVEAWYMDDSEEDQRRPHRLE) form a disordered region. Fe(2+)-binding residues include H88, H90, E94, and H133. Ni(2+) is bound by residues H88, H90, E94, and H133.

It belongs to the acireductone dioxygenase (ARD) family. Monomer. Interacts with MMP14. Fe(2+) serves as cofactor. It depends on Ni(2+) as a cofactor.

Its subcellular location is the cytoplasm. The protein localises to the nucleus. The protein resides in the cell membrane. It carries out the reaction 1,2-dihydroxy-5-(methylsulfanyl)pent-1-en-3-one + O2 = 4-methylsulfanyl-2-oxobutanoate + formate + 2 H(+). The catalysed reaction is 1,2-dihydroxy-5-(methylsulfanyl)pent-1-en-3-one + O2 = 3-(methylsulfanyl)propanoate + CO + formate + 2 H(+). The protein operates within amino-acid biosynthesis; L-methionine biosynthesis via salvage pathway; L-methionine from S-methyl-5-thio-alpha-D-ribose 1-phosphate: step 5/6. In terms of biological role, catalyzes 2 different reactions between oxygen and the acireductone 1,2-dihydroxy-3-keto-5-methylthiopentene (DHK-MTPene) depending upon the metal bound in the active site. Fe-containing acireductone dioxygenase (Fe-ARD) produces formate and 2-keto-4-methylthiobutyrate (KMTB), the alpha-ketoacid precursor of methionine in the methionine recycle pathway. Ni-containing acireductone dioxygenase (Ni-ARD) produces methylthiopropionate, carbon monoxide and formate, and does not lie on the methionine recycle pathway. Also down-regulates cell migration mediated by MMP14. This chain is Acireductone dioxygenase, found in Monodelphis domestica (Gray short-tailed opossum).